Reading from the N-terminus, the 71-residue chain is Protein KleB (71 aa).

The segment at residues 9–28 (IETCCRRCGKSIRTLSHTII) is a DNA-binding region (H-T-H motif).

This is Protein KleB (kleB) from Escherichia coli.